The following is a 514-amino-acid chain: Peptide chain release factor 3 (514 aa).

The tr-type G domain maps to 8-268; it reads KKRRTFAIIS…TFLKFAPEPH (261 aa). Residues 17-24, 85-89, and 139-142 contribute to the GTP site; these read SHPDAGKT, DTPGH, and NKLD.

This sequence belongs to the TRAFAC class translation factor GTPase superfamily. Classic translation factor GTPase family. PrfC subfamily.

The protein localises to the cytoplasm. In terms of biological role, increases the formation of ribosomal termination complexes and stimulates activities of RF-1 and RF-2. It binds guanine nucleotides and has strong preference for UGA stop codons. It may interact directly with the ribosome. The stimulation of RF-1 and RF-2 is significantly reduced by GTP and GDP, but not by GMP. In Streptococcus thermophilus (strain ATCC BAA-491 / LMD-9), this protein is Peptide chain release factor 3.